Here is an 85-residue protein sequence, read N- to C-terminus: Large ribosomal subunit protein bL27 (85 aa).

The interval 1 to 22 (MAKTKAGGSTRNGRDSKGRRLG) is disordered.

This sequence belongs to the bacterial ribosomal protein bL27 family.

The chain is Large ribosomal subunit protein bL27 from Mycoplasmopsis pulmonis (strain UAB CTIP) (Mycoplasma pulmonis).